The primary structure comprises 319 residues: Cytochrome c biogenesis protein CcsA (319 aa).

Helical transmembrane passes span 17-37, 44-64, 68-88, 143-163, 223-243, 257-271, and 286-306; these read TISIVITIHLITLLVHELGGL, GMIVTFFSITGFLVSRWASSG, LSNLYESLIFLSWALYILHTI, MLLSYATLLCGSLLSAAILII, VISLGFTLLTIGILCGAVWAN, TWAFITWTIFAIYLH, and VASIGFLIIWICYFGINLLGI.

It belongs to the CcmF/CycK/Ccl1/NrfE/CcsA family. May interact with Ccs1.

It localises to the plastid. It is found in the chloroplast thylakoid membrane. Functionally, required during biogenesis of c-type cytochromes (cytochrome c6 and cytochrome f) at the step of heme attachment. The polypeptide is Cytochrome c biogenesis protein CcsA (Lolium perenne (Perennial ryegrass)).